The sequence spans 62 residues: Neurotoxin 3 (62 aa).

The segment covering 1-16 (LECHDQQSSQTPTTTG) has biased composition (polar residues). A disordered region spans residues 1-22 (LECHDQQSSQTPTTTGCSGGET). 4 disulfides stabilise this stretch: Cys3/Cys24, Cys17/Cys41, Cys43/Cys54, and Cys55/Cys60.

It belongs to the three-finger toxin family. Short-chain subfamily. Type I alpha-neurotoxin sub-subfamily. As to expression, expressed by the venom gland.

It is found in the secreted. Binds to muscle nicotinic acetylcholine receptor (nAChR) and inhibit acetylcholine from binding to the receptor, thereby impairing neuromuscular transmission. The polypeptide is Neurotoxin 3 (Naja sputatrix (Malayan spitting cobra)).